A 211-amino-acid polypeptide reads, in one-letter code: MGVTCVSQVPLAEGKSVQQTVEILTRKLEQLGAEKQGTFYVDCETYHTAGASMGTPGQAGKLLYVMHNSEYPLSTFALFENGPCLVADLNLDVLMVKLKGFFQNAKANKMETRGTRYQYCDFLVKIGTVTVGQSGRGITVEVDYCPCAVPGDCWNLMMEFMQSFMGSHAPSVPPVFSAKHDPLYTPADTMVQYMELLNKIRKQQVTVAGMR.

The protein belongs to the Mediator complex subunit 20 family. In terms of assembly, component of the Mediator complex.

The protein localises to the nucleus. Functionally, component of the Mediator complex, a coactivator involved in the regulated transcription of nearly all RNA polymerase II-dependent genes. Mediator functions as a bridge to convey information from gene-specific regulatory proteins to the basal RNA polymerase II transcription machinery. Mediator is recruited to promoters by direct interactions with regulatory proteins and serves as a scaffold for the assembly of a functional preinitiation complex with RNA polymerase II and the general transcription factors. This chain is Mediator of RNA polymerase II transcription subunit 20 (med20), found in Xenopus laevis (African clawed frog).